The sequence spans 183 residues: Capsid protein (183 aa).

The segment at 136-183 (NAPILSTLPETTVVRRRGRSPRRRTPSPRRRRSQSPRRRRSQSPASQC) is disordered. The segment covering 149–176 (VRRRGRSPRRRTPSPRRRRSQSPRRRRS) has biased composition (basic residues). Residues Ser155, Ser162, and Ser170 each carry the phosphoserine; by host modification. The 1; half-length repeat unit spans residues 155 to 161 (SPRRRTP). Positions 155–177 (SPRRRTPSPRRRRSQSPRRRRSQ) are 3 X 8 AA repeats of S-P-R-R-R-[PR]-S-Q. Positions 158 to 175 (RRTPSPRRRRSQSPRRRR) match the Bipartite nuclear localization signal motif. 2 tandem repeats follow at residues 162-169 (SPRRRRSQ) and 170-177 (SPRRRRSQ). The segment at 177–183 (QSPASQC) is RNA binding.

It belongs to the orthohepadnavirus core antigen family. As to quaternary structure, homodimerizes, then multimerizes. Interacts with cytosol exposed regions of viral L glycoprotein present in the reticulum-to-Golgi compartment. Interacts with human FLNB. Phosphorylated form interacts with host importin alpha; this interaction depends on the exposure of the NLS, which itself depends upon genome maturation and/or phosphorylation of the capsid protein. Interacts with host NUP153. In terms of processing, phosphorylated by host SRPK1, SRPK2, and maybe protein kinase C or GAPDH. Phosphorylation is critical for pregenomic RNA packaging. Protein kinase C phosphorylation is stimulated by HBx protein and may play a role in transport of the viral genome to the nucleus at the late step during the viral replication cycle.

The protein localises to the virion. It localises to the host cytoplasm. Its function is as follows. Self assembles to form an icosahedral capsid. Most capsids appear to be large particles with an icosahedral symmetry of T=4 and consist of 240 copies of capsid protein, though a fraction forms smaller T=3 particles consisting of 180 capsid proteins. Entering capsids are transported along microtubules to the nucleus. Phosphorylation of the capsid is thought to induce exposure of nuclear localization signal in the C-terminal portion of the capsid protein that allows binding to the nuclear pore complex via the importin (karyopherin-) alpha and beta. Capsids are imported in intact form through the nuclear pore into the nuclear basket, where it probably binds NUP153. Only capsids that contain the mature viral genome can release the viral DNA and capsid protein into the nucleoplasm. Immature capsids get stuck in the basket. Capsids encapsulate the pre-genomic RNA and the P protein. Pre-genomic RNA is reverse-transcribed into DNA while the capsid is still in the cytoplasm. The capsid can then either be directed to the nucleus, providing more genomes for transcription, or bud through the endoplasmic reticulum to provide new virions. This chain is Capsid protein, found in Hepatitis B virus genotype F2 (isolate Brazil/w4B) (HBV-F).